The following is a 625-amino-acid chain: Cysteine-rich receptor-like protein kinase 46 (625 aa).

Positions 1 to 23 (MASTLISSLAVVLPLTLLAPSMS) are cleaved as a signal peptide. The Extracellular portion of the chain corresponds to 24-252 (MKISRIDVLG…LLAMSFTKEN (229 aa)). Gnk2-homologous domains are found at residues 29 to 130 (IDVL…NYSF) and 135 to 237 (VSHQ…NYTF). N-linked (GlcNAc...) asparagine glycans are attached at residues Asn-38, Asn-127, Asn-234, and Asn-252. The chain crosses the membrane as a helical span at residues 253-273 (LTYIFVISMVGVLAIAAGFWC). The Cytoplasmic segment spans residues 274–625 (GKCFYMRTSP…TKPPFLHDSM (352 aa)). The Protein kinase domain maps to 331–621 (FNESCKLGVG…LPTPTKPPFL (291 aa)). ATP-binding positions include 337–345 (LGVGGYGEV) and Lys-359. Position 404 is a phosphotyrosine (Tyr-404). Asp-454 serves as the catalytic Proton acceptor. Ser-458 carries the post-translational modification Phosphoserine. Thr-499 bears the Phosphothreonine mark. Tyr-507 is modified (phosphotyrosine).

This sequence belongs to the protein kinase superfamily. Ser/Thr protein kinase family. CRK subfamily.

Its subcellular location is the membrane. It carries out the reaction L-seryl-[protein] + ATP = O-phospho-L-seryl-[protein] + ADP + H(+). The enzyme catalyses L-threonyl-[protein] + ATP = O-phospho-L-threonyl-[protein] + ADP + H(+). The polypeptide is Cysteine-rich receptor-like protein kinase 46 (Arabidopsis thaliana (Mouse-ear cress)).